The primary structure comprises 201 residues: Small ribosomal subunit protein uS4 (201 aa).

One can recognise an S4 RNA-binding domain in the interval 92–155 (ARLDNVVFRL…KSLEVIANSL (64 aa)).

It belongs to the universal ribosomal protein uS4 family. As to quaternary structure, part of the 30S ribosomal subunit. Contacts protein S5. The interaction surface between S4 and S5 is involved in control of translational fidelity.

Its function is as follows. One of the primary rRNA binding proteins, it binds directly to 16S rRNA where it nucleates assembly of the body of the 30S subunit. In terms of biological role, with S5 and S12 plays an important role in translational accuracy. This chain is Small ribosomal subunit protein uS4, found in Phocaeicola vulgatus (strain ATCC 8482 / DSM 1447 / JCM 5826 / CCUG 4940 / NBRC 14291 / NCTC 11154) (Bacteroides vulgatus).